Consider the following 94-residue polypeptide: Alpha-elapitoxin-Nss2a (94 aa).

A signal peptide spans 1-21 (MKTLLLTLVVVTIVCLDLGDS). Intrachain disulfides connect Cys-24/Cys-41, Cys-34/Cys-62, Cys-47/Cys-51, Cys-66/Cys-77, and Cys-78/Cys-83.

It belongs to the three-finger toxin family. Long-chain subfamily. Type II alpha-neurotoxin sub-subfamily. In terms of tissue distribution, expressed by the venom gland.

It localises to the secreted. Binds with high affinity to muscular (alpha-1/CHRNA1) and neuronal (alpha-7/CHRNA7) nicotinic acetylcholine receptor (nAChR) and inhibits acetylcholine from binding to the receptor, thereby impairing neuromuscular and neuronal transmission. This is Alpha-elapitoxin-Nss2a from Notechis scutatus scutatus (Mainland tiger snake).